A 206-amino-acid chain; its full sequence is Large ribosomal subunit protein uL4 (206 aa).

It belongs to the universal ribosomal protein uL4 family. In terms of assembly, part of the 50S ribosomal subunit.

Functionally, one of the primary rRNA binding proteins, this protein initially binds near the 5'-end of the 23S rRNA. It is important during the early stages of 50S assembly. It makes multiple contacts with different domains of the 23S rRNA in the assembled 50S subunit and ribosome. Its function is as follows. Forms part of the polypeptide exit tunnel. This Bradyrhizobium diazoefficiens (strain JCM 10833 / BCRC 13528 / IAM 13628 / NBRC 14792 / USDA 110) protein is Large ribosomal subunit protein uL4.